The primary structure comprises 413 residues: tRNA (guanine-N(7)-)-methyltransferase non-catalytic subunit WDR4 (413 aa).

An N-acetylalanine modification is found at A2. 5 WD repeats span residues 61–100 (TGSDSILASTFSKSGRYFALTDDSKRLILFRTKPWQCLSV), 102–141 (MVVRRCTALTFTASEDRVLVADKSGDVYSFSVLEPDGCGR), 145–185 (GHLS…IESF), 188–228 (GHTE…QLQC), and 289–329 (TFPH…WQAA). The tract at residues 380–413 (RLQQQLKKKRQRSPFPGSPEQTKKACPGQSALSC) is disordered. S392 and S412 each carry phosphoserine.

It belongs to the WD repeat TRM82 family. As to quaternary structure, non-catalytic component of the METTL1-WDR4 complex, composed of METTL1 and WDR4. Interacts with FEN1; the interaction is direct.

The protein localises to the nucleus. It is found in the chromosome. It participates in tRNA modification; N(7)-methylguanine-tRNA biosynthesis. In terms of biological role, non-catalytic component of the METTL1-WDR4 methyltransferase complex required for the formation of N(7)-methylguanine in a subset of RNA species, such as tRNAs, mRNAs and microRNAs (miRNAs). In the METTL1-WDR4 methyltransferase complex, WDR4 acts as a scaffold for tRNA-binding. Required for the formation of N(7)-methylguanine at position 46 (m7G46) in a large subset of tRNAs that contain the 5'-RAGGU-3' motif within the variable loop. M7G46 interacts with C13-G22 in the D-loop to stabilize tRNA tertiary structure and protect tRNAs from decay. Also required for the formation of N(7)-methylguanine at internal sites in a subset of mRNAs. Also required for methylation of a specific subset of miRNAs, such as let-7. Acts as a regulator of embryonic stem cell self-renewal and differentiation. Independently of METTL1, also plays a role in genome stability: localizes at the DNA replication site and regulates endonucleolytic activities of FEN1. This is tRNA (guanine-N(7)-)-methyltransferase non-catalytic subunit WDR4 from Mus musculus (Mouse).